The chain runs to 159 residues: Cytochrome c-type biogenesis protein CcmE (159 aa).

The Cytoplasmic portion of the chain corresponds to 1–23; that stretch reads MSSQSFHNSPSLRVILKQRKKKR. Residues 24–44 traverse the membrane as a helical; Signal-anchor for type II membrane protein segment; sequence LLIVLFCCLIIAIATSLITYA. The Periplasmic portion of the chain corresponds to 45–159; that stretch reads LRNTVSFFRM…RLNKHHRVEK (115 aa). Residues His-138 and Tyr-142 each contribute to the heme site.

Belongs to the CcmE/CycJ family.

Its subcellular location is the cell inner membrane. Functionally, heme chaperone required for the biogenesis of c-type cytochromes. Transiently binds heme delivered by CcmC and transfers the heme to apo-cytochromes in a process facilitated by CcmF and CcmH. The chain is Cytochrome c-type biogenesis protein CcmE from Bartonella henselae (strain ATCC 49882 / DSM 28221 / CCUG 30454 / Houston 1) (Rochalimaea henselae).